Here is a 382-residue protein sequence, read N- to C-terminus: Dodecanoyl-[acyl-carrier-protein] hydrolase, chloroplastic (382 aa).

A chloroplast-targeting transit peptide spans 1–83 (MATTSLASAF…FSAAEKQWTN (83 aa)). Residues asparagine 283, histidine 285, and cysteine 320 contribute to the active site.

Belongs to the acyl-ACP thioesterase family.

It is found in the plastid. The protein resides in the chloroplast. It carries out the reaction dodecanoyl-[ACP] + H2O = dodecanoate + holo-[ACP] + H(+). Its function is as follows. Plays an essential role in chain termination during de novo fatty acid synthesis. High thioesterase activity for myristoyl-ACP. The polypeptide is Dodecanoyl-[acyl-carrier-protein] hydrolase, chloroplastic (Cinnamomum camphora (Camphor tree)).